The sequence spans 286 residues: Ribosome maturation factor RimP (286 aa).

Over residues 200–224 (LDGEDGDDTGVDAGDPDQDDADDAL) the composition is skewed to acidic residues. Residues 200–286 (LDGEDGDDTG…ANASTVKETH (87 aa)) are disordered. The segment covering 248–267 (VGRKAKGKKASPKKSNAKKK) has biased composition (basic residues). Residues 273-286 (AASSANASTVKETH) are compositionally biased toward polar residues.

It belongs to the RimP family.

It localises to the cytoplasm. Its function is as follows. Required for maturation of 30S ribosomal subunits. The sequence is that of Ribosome maturation factor RimP from Xanthobacter autotrophicus (strain ATCC BAA-1158 / Py2).